The following is a 331-amino-acid chain: Ketol-acid reductoisomerase (NADP(+)) (331 aa).

The 181-residue stretch at 2 to 182 folds into the KARI N-terminal Rossmann domain; that stretch reads ARLYYDADAN…GGTRAGILET (181 aa). NADP(+)-binding positions include 25–28, S51, S53, and 83–86; these read YGSQ and DEVQ. Residue H108 is part of the active site. G134 is a binding site for NADP(+). Residues 183–328 enclose the KARI C-terminal knotted domain; it reads TFREETETDL…KDLRAMFSWL (146 aa). Mg(2+) is bound by residues D191, E195, E227, and E231. S252 contacts substrate.

It belongs to the ketol-acid reductoisomerase family. It depends on Mg(2+) as a cofactor.

It catalyses the reaction (2R)-2,3-dihydroxy-3-methylbutanoate + NADP(+) = (2S)-2-acetolactate + NADPH + H(+). The catalysed reaction is (2R,3R)-2,3-dihydroxy-3-methylpentanoate + NADP(+) = (S)-2-ethyl-2-hydroxy-3-oxobutanoate + NADPH + H(+). It functions in the pathway amino-acid biosynthesis; L-isoleucine biosynthesis; L-isoleucine from 2-oxobutanoate: step 2/4. It participates in amino-acid biosynthesis; L-valine biosynthesis; L-valine from pyruvate: step 2/4. Functionally, involved in the biosynthesis of branched-chain amino acids (BCAA). Catalyzes an alkyl-migration followed by a ketol-acid reduction of (S)-2-acetolactate (S2AL) to yield (R)-2,3-dihydroxy-isovalerate. In the isomerase reaction, S2AL is rearranged via a Mg-dependent methyl migration to produce 3-hydroxy-3-methyl-2-ketobutyrate (HMKB). In the reductase reaction, this 2-ketoacid undergoes a metal-dependent reduction by NADPH to yield (R)-2,3-dihydroxy-isovalerate. The chain is Ketol-acid reductoisomerase (NADP(+)) from Cyanothece sp. (strain PCC 7425 / ATCC 29141).